The primary structure comprises 88 residues: Small ribosomal subunit protein uS17 (88 aa).

The protein belongs to the universal ribosomal protein uS17 family. Part of the 30S ribosomal subunit.

Functionally, one of the primary rRNA binding proteins, it binds specifically to the 5'-end of 16S ribosomal RNA. The chain is Small ribosomal subunit protein uS17 from Maridesulfovibrio salexigens (strain ATCC 14822 / DSM 2638 / NCIMB 8403 / VKM B-1763) (Desulfovibrio salexigens).